A 734-amino-acid chain; its full sequence is MNTSLRLNHYWITCADGLETLLQEEIEQLGTKVTERKAGRLIIEGTLEHAYRICMWSRLASRVLLPIHTYELERTHDARDVAEELYEGAISFDWSLIFAPQSTFAIRLHAEREIKVNTQFATLRVKDGVVDSFMEAVGRRPSIDTKQPEITLYVLAGKTEHTYCLDLSGDSLHKRGYRRFMTDAPIKENLAAAILQKAKLQERNPEIVLDPMCGSGTFIIEALMILTDRAPGLVRRFGFNGWHGHDRELWLSLKAEAAERHEKALEQPLPKFYAYDADWEAVKATRENIIAAGFEKLLGDIQIEERTLADWPDFGAENKTAFIVTNPPYGERLGDKASNRSLYLGLSALLQKNFPNQYAAIIAAQIEQADVLAFEAPETLRLMNGKLPIYVRFGTVKPEKVTQPFLANWQAQPVEMEEAQDFANRLQKNMTALKKWATKENIYCLRLYDADLPDFNLAVDLYGDRLHVQEYAPPKKIDPEKAKKRFNLALAAIRAVTGLNRDAIFIKTRARQTGTNQYTKQSTANKRFIVQEGKAKILVNLTDYLDTGLFLDHRQMRLRIAQEARGKHFLNLYSYTSTASLHAALGGAASTTSVDLSNTYLSWSKENFVLNGLTVDHADEQHMFFASDCFEWLKEGHEQYDLIFIDPPTFSNSKKFHGTFDVQRDHVSLIKRAMNRLTSEGTLYFSNNYRGFEMDEEIEALYDVEEITSETIGPDFKRNQKIHRAWKIQHPGLN.

Positions 49–167 constitute a THUMP domain; the sequence is HAYRICMWSR…KTEHTYCLDL (119 aa).

Belongs to the methyltransferase superfamily. RlmKL family.

Its subcellular location is the cytoplasm. It carries out the reaction guanosine(2445) in 23S rRNA + S-adenosyl-L-methionine = N(2)-methylguanosine(2445) in 23S rRNA + S-adenosyl-L-homocysteine + H(+). The enzyme catalyses guanosine(2069) in 23S rRNA + S-adenosyl-L-methionine = N(2)-methylguanosine(2069) in 23S rRNA + S-adenosyl-L-homocysteine + H(+). Functionally, specifically methylates the guanine in position 2445 (m2G2445) and the guanine in position 2069 (m7G2069) of 23S rRNA. The protein is Ribosomal RNA large subunit methyltransferase K/L of Acinetobacter baumannii (strain AYE).